Consider the following 460-residue polypeptide: UDP-N-acetylmuramate--L-alanine ligase (460 aa).

Position 116 to 122 (116 to 122 (GSHGKTT)) interacts with ATP.

This sequence belongs to the MurCDEF family.

Its subcellular location is the cytoplasm. The enzyme catalyses UDP-N-acetyl-alpha-D-muramate + L-alanine + ATP = UDP-N-acetyl-alpha-D-muramoyl-L-alanine + ADP + phosphate + H(+). It participates in cell wall biogenesis; peptidoglycan biosynthesis. Cell wall formation. This Caldanaerobacter subterraneus subsp. tengcongensis (strain DSM 15242 / JCM 11007 / NBRC 100824 / MB4) (Thermoanaerobacter tengcongensis) protein is UDP-N-acetylmuramate--L-alanine ligase.